The primary structure comprises 381 residues: MSVKDKREKMTATREEFAEVQQAFAAYADEFAADVDDKRDVSELVDGIDTLRTEMNSTNDAFRAYSEEFAADVEHFHTSVADRRDAFDAYADIFATDVAEMQDVSDLLAAIDDLRAEMDETHEAFDAYADAFVTDVATLRDVSDLLTAISELQSEFVSVQGEFNGYASEFGADIDQFHAVVAEKRDGHKDVADAFLQYREEFHGVEVQSLLDNIAAFQREMGDYRKAFETTEEAFASFARDFYGQGAAPMATPLNNAAETAVTGTETEVDIPPIEDSVEPDGEDEDSKADDVEAEAEVETVEMEFGAEMDTEADEDVQSESVREDDQFLDDETPEDMVQCLVCGEYYQAITEPHLQTHDMTIKKYREEYGEDVPLRPDDKA.

7 repeat units span residues 22–59, 60–84, 85–122, 123–160, 161–192, 193–232, and 233–274. The segment at 22-274 is 7 X approximate tandem repeats; it reads QAFAAYADEF…TETEVDIPPI (253 aa). Residues 261-333 form a disordered region; the sequence is AVTGTETEVD…EDDQFLDDET (73 aa). Over residues 276-318 the composition is skewed to acidic residues; sequence DSVEPDGEDEDSKADDVEAEAEVETVEMEFGAEMDTEADEDVQ.

The protein belongs to the halobacterial gas vesicle GvpC family. In terms of processing, detected as 2 slightly different sizes in vivo; the proteins appears larger in SDS-PAGE probably due to the acidic tail.

It localises to the gas vesicle. Functionally, confers stability, involved in shaping gas vesicles (GV), hollow, gas filled proteinaceous nanostructures found in some microorganisms. They allow positioning of halobacteria at the optimal depth for growth in the poorly aerated, shallow brine pools of their habitat. In terms of biological role, expression of a 9.5 kb mc-vac DNA fragment containing 2 divergently transcribed regions (gvpD-gvpE-gvpF-gvpG-gvpH-gvpI-gvpJ-gvpK-gvpL-gvpM and gvpA-gvpC-gvpN-gvpO) allows H.volcanii to produce gas vesicles. The protein is Gas vesicle protein C of Haloferax mediterranei (strain ATCC 33500 / DSM 1411 / JCM 8866 / NBRC 14739 / NCIMB 2177 / R-4) (Halobacterium mediterranei).